The following is a 147-amino-acid chain: S-protein homolog 10 (147 aa).

Residues 1-20 (MNCFSYFFLVIILCAGLNNA) form the signal peptide.

It belongs to the plant self-incompatibility (S1) protein family.

It is found in the secreted. This is S-protein homolog 10 from Arabidopsis thaliana (Mouse-ear cress).